A 467-amino-acid chain; its full sequence is E3 ubiquitin-protein ligase TRIM11 (467 aa).

The RING-type zinc-finger motif lies at 16 to 57 (CAICLDYFTDPVMTDCGHNFCRECIRRCWGQPEGPYACPECR). Ser85 bears the Phosphoserine mark. The B box-type zinc-finger motif lies at 87 to 127 (VPQGVCAAHREPLTTFCGDDLSLLCPTCERSEHWAHRVRPL). Residues Cys92, His95, Cys114, and His119 each contribute to the Zn(2+) site. Positions 127–207 (LQEAADDLKG…KLEEEELEVL (81 aa)) form a coiled coil. In terms of domain architecture, B30.2/SPRY spans 267 to 460 (ELRTVCRVPG…MTICRLIGVS (194 aa)). Residues 304 to 313 (DRRSVQRGEQ) are compositionally biased toward basic and acidic residues. The interval 304–325 (DRRSVQRGEQRQALPDSPERFD) is disordered.

Belongs to the TRIM/RBCC family. Binds cytoplasmic tail of integrin alpha-1. Interacts with the HN peptide. Interacts with PHOX2B. Interacts (when autoubiquitinated) with SQSTM1/p62; promoting AIM2 recruitment to autophagosomes. Interacts with AIM2; promoting its autophagy-dependent degradation. In terms of processing, autoubiquitinated upon DNA stimulation; autoubiquitination promotes interaction with SQSTM1/p62 and recruitment of AIM2 to autophagosomes.

The protein localises to the cytoplasm. It localises to the nucleus. It carries out the reaction S-ubiquitinyl-[E2 ubiquitin-conjugating enzyme]-L-cysteine + [acceptor protein]-L-lysine = [E2 ubiquitin-conjugating enzyme]-L-cysteine + N(6)-ubiquitinyl-[acceptor protein]-L-lysine.. It participates in protein modification; protein ubiquitination. Its function is as follows. E3 ubiquitin-protein ligase that promotes the degradation of insoluble ubiquitinated proteins, including insoluble PAX6, poly-Gln repeat expanded HTT and poly-Ala repeat expanded ARX. Mediates PAX6 ubiquitination leading to proteasomal degradation, thereby modulating cortical neurogenesis. May also inhibit PAX6 transcriptional activity, possibly in part by preventing the binding of PAX6 to its consensus sequences. May contribute to the regulation of the intracellular level of HN (humanin) or HN-containing proteins through the proteasomal degradation pathway. Mediates MED15 ubiquitination leading to proteasomal degradation. May contribute to the innate restriction of retroviruses. Upon overexpression, reduces HIV-1 and murine leukemia virus infectivity, by suppressing viral gene expression. Antiviral activity depends on a functional E3 ubiquitin-protein ligase domain. May regulate TRIM5 turnover via the proteasome pathway, thus counteracting the TRIM5-mediated cross-species restriction of retroviral infection at early stages of the retroviral life cycle. Acts as an inhibitor of the AIM2 inflammasome by promoting autophagy-dependent degradation of AIM2. Mechanistically, undergoes autoubiquitination upon DNA stimulation, promoting interaction with AIM2 and SQSTM1/p62, leading to AIM2 recruitment to autophagosomes. The chain is E3 ubiquitin-protein ligase TRIM11 (Trim11) from Rattus norvegicus (Rat).